Here is an 859-residue protein sequence, read N- to C-terminus: MTSKQAMSSNEQERLLCYNGEVLVFQLSKGNFADKEPTKTPILHVRRMVFDRGTKVFVQKSTGFFTIKEENSHLKIMCCNCVSDFRTGINLPYIVIEKNKKNNVFEYFLLILHSTNKFEMRLSFKLGYEMKDGLRVLNGPLILWRHVKAFFFISSQTGKVVSVSGNFSSIQWAGEIENLGMVLLGLKECCLSEEECTQEPSKSDYAIWNTKFCVYSLESQEVLSDIYIIPPAYSSVVTYVHICATEIIKNQLRISLIALTRKNQLISFQNGTPKNVCQLPFGDPCAVQLMDSGGGNLFFVVSFISNNACAVWKESFQVAAKWEKLSLVLIDDFIGSGTEQVLLLFKDSLNSDCLTSFKITDLGKINYSSEPSDCNEDDLFEDKQENRYLVVPPLETGLKVCFSSFRELRQHLLLKEKIISKSYKALINLVQGKDDNTSSAEEKECLVPLCGEEENSVHILDEKLSDNFQDSEQLVEKIWYRVIDDSLVVGVKTTSSLKLSLNDVTLSLLMDQAHDSRFRLLKCQNRVIKLSTNPFPAPYLMPCEIGLEAKRVTLTPDSKKEESFVCEHPSKKECVQIITAVTSLSPLLTFSKFCCTVLLQIMERESGNCPKDRYVVCGRVFLSLEDLSTGKYLLTFPKKKPIEHMEDLFALLAAFHKSCFQITSPGYALNSMKVWLLEHMKCEIIKEFPEVYFCERPGSFYGTLFTWKQRTPFEGILIIYSRNQTVMFQCLHNLIRILPINCFLKNLKSGSENFLIDNMAFTLEKELVTLSSLSSAIAKHESNFMQRCEVSKGKSSVVAAALSDRRENIHPYRKELQREKKKMLQTNLKVSGALYREITLKVAEVQLKSDFAAQKLSNL.

Threonine 2 is modified (N-acetylthreonine).

Belongs to the multisubunit FA complex composed of FANCA, FANCB, FANCC, FANCE, FANCF, FANCG, FANCL/PHF9 and FANCM. The complex is not found in FA patients.

Its subcellular location is the nucleus. DNA repair protein required for FANCD2 ubiquitination. The chain is Fanconi anemia group B protein (FANCB) from Homo sapiens (Human).